A 391-amino-acid polypeptide reads, in one-letter code: Phosphoglycerate kinase (391 aa).

Substrate contacts are provided by residues 21–23 (DLN), R36, 59–62 (HLGR), R113, and R146. ATP is bound by residues K197, E319, and 345 to 348 (GGDT).

It belongs to the phosphoglycerate kinase family. Monomer.

The protein localises to the cytoplasm. The catalysed reaction is (2R)-3-phosphoglycerate + ATP = (2R)-3-phospho-glyceroyl phosphate + ADP. Its pathway is carbohydrate degradation; glycolysis; pyruvate from D-glyceraldehyde 3-phosphate: step 2/5. The chain is Phosphoglycerate kinase from Colwellia psychrerythraea (strain 34H / ATCC BAA-681) (Vibrio psychroerythus).